The primary structure comprises 102 residues: Phosphoribosyl-ATP pyrophosphatase (102 aa).

This sequence belongs to the PRA-PH family.

The protein resides in the cytoplasm. The catalysed reaction is 1-(5-phospho-beta-D-ribosyl)-ATP + H2O = 1-(5-phospho-beta-D-ribosyl)-5'-AMP + diphosphate + H(+). It functions in the pathway amino-acid biosynthesis; L-histidine biosynthesis; L-histidine from 5-phospho-alpha-D-ribose 1-diphosphate: step 2/9. This is Phosphoribosyl-ATP pyrophosphatase from Dinoroseobacter shibae (strain DSM 16493 / NCIMB 14021 / DFL 12).